The chain runs to 430 residues: Glutamate-1-semialdehyde 2,1-aminomutase 2 (430 aa).

Lys-268 carries the post-translational modification N6-(pyridoxal phosphate)lysine.

Belongs to the class-III pyridoxal-phosphate-dependent aminotransferase family. HemL subfamily. As to quaternary structure, homodimer. It depends on pyridoxal 5'-phosphate as a cofactor.

The protein resides in the cytoplasm. The catalysed reaction is (S)-4-amino-5-oxopentanoate = 5-aminolevulinate. The protein operates within porphyrin-containing compound metabolism; protoporphyrin-IX biosynthesis; 5-aminolevulinate from L-glutamyl-tRNA(Glu): step 2/2. This chain is Glutamate-1-semialdehyde 2,1-aminomutase 2, found in Shouchella clausii (strain KSM-K16) (Alkalihalobacillus clausii).